We begin with the raw amino-acid sequence, 330 residues long: 5'-AMP-activated protein kinase subunit gamma-1 (330 aa).

The disordered stretch occupies residues 1-21; sequence MESVAAESSPALENEHFQETP. CBS domains lie at 42-102, 124-186, and 197-259; these read PTSS…KSAL, SFKP…PKPE, and IGTY…NLDV. ADP contacts are provided by residues arginine 69, 84-89, valine 129, 150-151, and lysine 169; these read MLTITD and HR. Residues arginine 69, 84–89, valine 129, histidine 150, 150–151, lysine 169, threonine 199, alanine 204, 225–226, and 241–244 contribute to the AMP site; these read MLTITD, HR, SA, and SKFD. ATP-binding positions include arginine 69, 84 to 89, valine 129, 150 to 151, arginine 151, and lysine 169; these read MLTITD and HR. The AMPK pseudosubstrate motif lies at 137 to 158; the sequence is LFDAVSSLIRNKIHRLPVIDPE. 241 to 244 lines the ADP pocket; sequence SKFD. Residue 241–244 participates in ATP binding; that stretch reads SKFD. Serine 260 carries the phosphoserine; by ULK1 modification. Phosphothreonine; by ULK1 is present on threonine 262. Arginine 268 serves as a coordination point for ADP. An AMP-binding site is contributed by arginine 268. Arginine 268 is an ATP binding site. The residue at position 269 (serine 269) is a Phosphoserine; by ULK1. The CBS 4 domain occupies 271 to 328; that stretch reads YFEGVLKCYLHETLETIINRLVEAEVHRLVVVDEHDVVKGIVSLSDILQALVLTGGEK. ADP-binding positions include leucine 276 and 297 to 298; that span reads HR. Residues leucine 276, histidine 297, 297–298, and 313–316 each bind AMP; these read HR and SLSD. Residues leucine 276 and 297-298 contribute to the ATP site; that span reads HR.

Belongs to the 5'-AMP-activated protein kinase gamma subunit family. As to quaternary structure, AMPK is a heterotrimer of an alpha catalytic subunit (PRKAA1 or PRKAA2), a beta (PRKAB1 or PRKAB2) and a gamma non-catalytic subunits (PRKAG1, PRKAG2 or PRKAG3). Interacts with FNIP1 and FNIP2. Phosphorylated by ULK1 and ULK2; leading to negatively regulate AMPK activity and suggesting the existence of a regulatory feedback loop between ULK1, ULK2 and AMPK. Post-translationally, glycosylated; O-GlcNAcylated by OGT, promoting the AMP-activated protein kinase (AMPK) activity.

AMP/ATP-binding subunit of AMP-activated protein kinase (AMPK), an energy sensor protein kinase that plays a key role in regulating cellular energy metabolism. In response to reduction of intracellular ATP levels, AMPK activates energy-producing pathways and inhibits energy-consuming processes: inhibits protein, carbohydrate and lipid biosynthesis, as well as cell growth and proliferation. AMPK acts via direct phosphorylation of metabolic enzymes, and by longer-term effects via phosphorylation of transcription regulators. Also acts as a regulator of cellular polarity by remodeling the actin cytoskeleton; probably by indirectly activating myosin. Gamma non-catalytic subunit mediates binding to AMP, ADP and ATP, leading to activate or inhibit AMPK: AMP-binding results in allosteric activation of alpha catalytic subunit (PRKAA1 or PRKAA2) both by inducing phosphorylation and preventing dephosphorylation of catalytic subunits. ADP also stimulates phosphorylation, without stimulating already phosphorylated catalytic subunit. ATP promotes dephosphorylation of catalytic subunit, rendering the AMPK enzyme inactive. This Mus musculus (Mouse) protein is 5'-AMP-activated protein kinase subunit gamma-1 (Prkag1).